The primary structure comprises 147 residues: Small ribosomal subunit protein bS16m (147 aa).

It belongs to the bacterial ribosomal protein bS16 family. In terms of assembly, component of the mitochondrial ribosome small subunit (28S) which comprises a 12S rRNA and about 30 distinct proteins.

It is found in the mitochondrion. The polypeptide is Small ribosomal subunit protein bS16m (mrps-16) (Caenorhabditis elegans).